The following is a 281-amino-acid chain: Alcohol dehydrogenase-related 31 kDa protein (281 aa).

Position 11-34 (11-34 (YVADCGGIALETSKVLMTKNIAKL)) interacts with NAD(+). A substrate-binding site is contributed by S139. Y152 acts as the Proton acceptor in catalysis.

Belongs to the short-chain dehydrogenases/reductases (SDR) family.

This Drosophila ambigua (Fruit fly) protein is Alcohol dehydrogenase-related 31 kDa protein (Adhr).